A 554-amino-acid polypeptide reads, in one-letter code: Chaperonin GroEL (554 aa).

ATP is bound by residues 29–32 (TLGP), Lys-50, 86–90 (DGTTT), Gly-418, and Asp-499. The disordered stretch occupies residues 528-554 (HEEDNNTNRSGGGVGGGHHGGMGGMDF). Positions 537 to 554 (SGGGVGGGHHGGMGGMDF) are enriched in gly residues.

Belongs to the chaperonin (HSP60) family. In terms of assembly, forms a cylinder of 14 subunits composed of two heptameric rings stacked back-to-back. Interacts with the co-chaperonin GroES.

It is found in the cytoplasm. It carries out the reaction ATP + H2O + a folded polypeptide = ADP + phosphate + an unfolded polypeptide.. In terms of biological role, together with its co-chaperonin GroES, plays an essential role in assisting protein folding. The GroEL-GroES system forms a nano-cage that allows encapsulation of the non-native substrate proteins and provides a physical environment optimized to promote and accelerate protein folding. In Orientia tsutsugamushi (strain Boryong) (Rickettsia tsutsugamushi), this protein is Chaperonin GroEL.